Here is a 391-residue protein sequence, read N- to C-terminus: uncharacterized protein (391 aa).

Belongs to the mimivirus L17x/L18x family.

This is an uncharacterized protein from Acanthamoeba polyphaga (Amoeba).